We begin with the raw amino-acid sequence, 146 residues long: Antirestriction protein KlcA (146 aa).

Belongs to the antirestriction protein family.

Could be involved in overcoming restriction barriers during establishment after conjugative transfer. The sequence is that of Antirestriction protein KlcA (klcA) from Escherichia coli.